The chain runs to 254 residues: Glutamate racemase (254 aa).

Substrate contacts are provided by residues 10–11 and 42–43; these read DS and YG. Cysteine 73 serves as the catalytic Proton donor/acceptor. 74 to 75 contacts substrate; that stretch reads NT. The active-site Proton donor/acceptor is cysteine 183. 184 to 185 lines the substrate pocket; the sequence is TH.

It belongs to the aspartate/glutamate racemases family.

It carries out the reaction L-glutamate = D-glutamate. It functions in the pathway cell wall biogenesis; peptidoglycan biosynthesis. Functionally, provides the (R)-glutamate required for cell wall biosynthesis. The sequence is that of Glutamate racemase from Herpetosiphon aurantiacus (strain ATCC 23779 / DSM 785 / 114-95).